Reading from the N-terminus, the 84-residue chain is UPF0457 protein BC_3525 (84 aa).

It belongs to the UPF0457 family.

In Bacillus cereus (strain ATCC 14579 / DSM 31 / CCUG 7414 / JCM 2152 / NBRC 15305 / NCIMB 9373 / NCTC 2599 / NRRL B-3711), this protein is UPF0457 protein BC_3525.